The primary structure comprises 1589 residues: Pentafunctional AROM polypeptide (1589 aa).

The tract at residues 1 to 392 (MVKFEKVPIL…YGKSAHYVND (392 aa)) is 3-dehydroquinate synthase. NAD(+)-binding positions include 43-45 (DTN), 78-81 (EANK), 109-111 (GGI), and Asp-114. Arg-125 lines the 7-phospho-2-dehydro-3-deoxy-D-arabino-heptonate pocket. 134 to 135 (TS) contacts NAD(+). Residues Asp-141 and Lys-147 each coordinate 7-phospho-2-dehydro-3-deoxy-D-arabino-heptonate. Lys-156 contacts NAD(+). Asn-157 serves as a coordination point for 7-phospho-2-dehydro-3-deoxy-D-arabino-heptonate. Residues 174-177 (WLET) and Asn-185 each bind NAD(+). Residue Glu-189 participates in Zn(2+) binding. 7-phospho-2-dehydro-3-deoxy-D-arabino-heptonate contacts are provided by residues 189–192 (EVIK) and Lys-258. The active-site Proton acceptor; for 3-dehydroquinate synthase activity is Glu-268. 7-phospho-2-dehydro-3-deoxy-D-arabino-heptonate-binding positions include 272–276 (RNLLN) and His-279. His-279 contacts Zn(2+). His-283 functions as the Proton acceptor; for 3-dehydroquinate synthase activity in the catalytic mechanism. 2 residues coordinate 7-phospho-2-dehydro-3-deoxy-D-arabino-heptonate: His-295 and Lys-364. Residue His-295 participates in Zn(2+) binding. The interval 405-872 (VYPFSNIPQE…WDVLHTELGA (468 aa)) is EPSP synthase. Cys-854 serves as the catalytic For EPSP synthase activity. The interval 891–1081 (SVVLIGMRAA…VPNKRSAFVC (191 aa)) is shikimate kinase. 896–903 (GMRAAGKS) lines the ATP pocket. The 3-dehydroquinase stretch occupies residues 1082 to 1294 (LTFGDLTEKA…SAPGQLTLAQ (213 aa)). His-1199 functions as the Proton acceptor; for 3-dehydroquinate dehydratase activity in the catalytic mechanism. Lys-1228 functions as the Schiff-base intermediate with substrate; for 3-dehydroquinate dehydratase activity in the catalytic mechanism. Residues 1307–1589 (SKKFFVVGNP…QEIFNAVTRD (283 aa)) are shikimate dehydrogenase.

It in the N-terminal section; belongs to the sugar phosphate cyclases superfamily. Dehydroquinate synthase family. The protein in the 2nd section; belongs to the EPSP synthase family. In the 3rd section; belongs to the shikimate kinase family. This sequence in the 4th section; belongs to the type-I 3-dehydroquinase family. It in the C-terminal section; belongs to the shikimate dehydrogenase family. In terms of assembly, homodimer. Zn(2+) serves as cofactor.

It is found in the cytoplasm. The enzyme catalyses 7-phospho-2-dehydro-3-deoxy-D-arabino-heptonate = 3-dehydroquinate + phosphate. It catalyses the reaction 3-dehydroquinate = 3-dehydroshikimate + H2O. The catalysed reaction is shikimate + NADP(+) = 3-dehydroshikimate + NADPH + H(+). It carries out the reaction shikimate + ATP = 3-phosphoshikimate + ADP + H(+). The enzyme catalyses 3-phosphoshikimate + phosphoenolpyruvate = 5-O-(1-carboxyvinyl)-3-phosphoshikimate + phosphate. It participates in metabolic intermediate biosynthesis; chorismate biosynthesis; chorismate from D-erythrose 4-phosphate and phosphoenolpyruvate: step 2/7. The protein operates within metabolic intermediate biosynthesis; chorismate biosynthesis; chorismate from D-erythrose 4-phosphate and phosphoenolpyruvate: step 3/7. It functions in the pathway metabolic intermediate biosynthesis; chorismate biosynthesis; chorismate from D-erythrose 4-phosphate and phosphoenolpyruvate: step 4/7. Its pathway is metabolic intermediate biosynthesis; chorismate biosynthesis; chorismate from D-erythrose 4-phosphate and phosphoenolpyruvate: step 5/7. It participates in metabolic intermediate biosynthesis; chorismate biosynthesis; chorismate from D-erythrose 4-phosphate and phosphoenolpyruvate: step 6/7. The AROM polypeptide catalyzes 5 consecutive enzymatic reactions in prechorismate polyaromatic amino acid biosynthesis. The protein is Pentafunctional AROM polypeptide of Zygosaccharomyces rouxii (strain ATCC 2623 / CBS 732 / NBRC 1130 / NCYC 568 / NRRL Y-229).